The following is an 898-amino-acid chain: Serine/threonine-protein kinase TAO3 (898 aa).

Residues 24 to 277 (FIGLHEIGHG…SAELLRHDFV (254 aa)) form the Protein kinase domain. Residues 30 to 38 (IGHGSFGAV) and lysine 53 contribute to the ATP site. Aspartate 147 (proton acceptor) is an active-site residue. 2 disordered regions span residues 316 to 362 (TRNG…SQSS) and 405 to 425 (DEAG…VQSQ). Position 324 is a phosphoserine; by ATM (serine 324). Phosphoserine is present on residues serine 331, serine 343, serine 346, and serine 349. Residues 334–351 (GTSLNREMDSLGSNHSIP) are compositionally biased toward polar residues. Residues 352–362 (SMSVSTGSQSS) are compositionally biased toward low complexity. At threonine 357 the chain carries Phosphothreonine. A Phosphoserine modification is found at serine 359. The span at 405–416 (DEAGHGDPRPEP) shows a compositional bias: basic and acidic residues. Phosphoserine is present on serine 442. Coiled coils occupy residues 452-502 (EQEN…THAN), 548-649 (FLES…HAML), and 754-879 (LKTL…DMES). The disordered stretch occupies residues 565–596 (EEMNEDHSTPKKEKQERISKHKENLQHTQAEE). Lysine 830 bears the N6-acetyllysine mark.

The protein belongs to the protein kinase superfamily. STE Ser/Thr protein kinase family. STE20 subfamily. In terms of assembly, self-associates. Interacts with ERN1 and TRAF2. Interaction with TRAF2 is facilitated under ER stress conditions, such as treatment with tunicamycin, and may promote TRAF2 phosphorylation. Interacts (via N-terminus) with STK25; the interaction promotes STK25 abundance at the level of protein expression and/or stability. (Microbial infection) Interacts with herpes simplex virus 1 UL37 protein. Post-translationally, autophosphorylated. Phosphorylation at Ser-324 by ATM following DNA damage is required for activation of the p38/MAPK14 stress-activated MAPK cascade. Phosphorylated at Ser-324 and on Tyr residues during T cell activation. Phosphorylated by LRRK2. As to expression, ubiquitously expressed at a low level, and highly expressed in peripheral blood leukocytes (PBLs), thymus, spleen, kidney, skeletal muscle, heart and liver.

It is found in the cytoplasm. The protein localises to the cell membrane. It localises to the membrane raft. The protein resides in the lipid droplet. It catalyses the reaction L-seryl-[protein] + ATP = O-phospho-L-seryl-[protein] + ADP + H(+). The enzyme catalyses L-threonyl-[protein] + ATP = O-phospho-L-threonyl-[protein] + ADP + H(+). Functionally, serine/threonine-protein kinase that acts as a regulator of the p38/MAPK14 stress-activated MAPK cascade and of the MAPK8/JNK cascade. In response to DNA damage, involved in the G2/M transition DNA damage checkpoint by activating the p38/MAPK14 stress-activated MAPK cascade, probably by mediating phosphorylation of upstream MAP2K3 and MAP2K6 kinases. Inhibits basal activity of the MAPK8/JNK cascade and diminishes its activation in response to epidermal growth factor (EGF). Positively regulates canonical T cell receptor (TCR) signaling by preventing early PTPN6/SHP1-mediated inactivation of LCK, ensuring sustained TCR signaling that is required for optimal activation and differentiation of T cells. Phosphorylates PTPN6/SHP1 on 'Thr-394', leading to its polyubiquitination and subsequent proteasomal degradation. Required for cell surface expression of metalloprotease ADAM10 on type 1 transitional B cells which is necessary for their NOTCH-mediated development into marginal zone B cells. Also required for the NOTCH-mediated terminal differentiation of splenic conventional type 2 dendritic cells. Positively regulates osteoblast differentiation by acting as an upstream activator of the JNK pathway. Promotes JNK signaling in hepatocytes and positively regulates hepatocyte lipid storage by inhibiting beta-oxidation and triacylglycerol secretion while enhancing lipid synthesis. Restricts age-associated inflammation by negatively regulating differentiation of macrophages and their production of pro-inflammatory cytokines. Plays a role in negatively regulating the abundance of regulatory T cells in white adipose tissue. In Homo sapiens (Human), this protein is Serine/threonine-protein kinase TAO3 (TAOK3).